A 240-amino-acid polypeptide reads, in one-letter code: 1-(5-phosphoribosyl)-5-[(5-phosphoribosylamino)methylideneamino] imidazole-4-carboxamide isomerase (240 aa).

Catalysis depends on aspartate 9, which acts as the Proton acceptor. The Proton donor role is filled by aspartate 131.

Belongs to the HisA/HisF family.

The protein localises to the cytoplasm. It carries out the reaction 1-(5-phospho-beta-D-ribosyl)-5-[(5-phospho-beta-D-ribosylamino)methylideneamino]imidazole-4-carboxamide = 5-[(5-phospho-1-deoxy-D-ribulos-1-ylimino)methylamino]-1-(5-phospho-beta-D-ribosyl)imidazole-4-carboxamide. It participates in amino-acid biosynthesis; L-histidine biosynthesis; L-histidine from 5-phospho-alpha-D-ribose 1-diphosphate: step 4/9. The protein is 1-(5-phosphoribosyl)-5-[(5-phosphoribosylamino)methylideneamino] imidazole-4-carboxamide isomerase of Azobacteroides pseudotrichonymphae genomovar. CFP2.